An 84-amino-acid chain; its full sequence is Large ribosomal subunit protein bL27 (84 aa).

Belongs to the bacterial ribosomal protein bL27 family.

This is Large ribosomal subunit protein bL27 from Campylobacter jejuni subsp. jejuni serotype O:6 (strain 81116 / NCTC 11828).